A 296-amino-acid polypeptide reads, in one-letter code: 4-hydroxybenzoate octaprenyltransferase (296 aa).

8 consecutive transmembrane segments (helical) span residues 28 to 48 (IGTL…SDGI), 51 to 71 (LAVL…GCVI), 102 to 122 (LLLT…LNHL), 143 to 163 (FFPI…PMAF), 174 to 194 (AWIL…VYAM), 212 to 232 (FGRY…LLMA), 233 to 253 (VLGA…IVLL), and 274 to 294 (FLAN…HTFF).

Belongs to the UbiA prenyltransferase family. Mg(2+) serves as cofactor.

The protein resides in the cell inner membrane. It catalyses the reaction all-trans-octaprenyl diphosphate + 4-hydroxybenzoate = 4-hydroxy-3-(all-trans-octaprenyl)benzoate + diphosphate. The protein operates within cofactor biosynthesis; ubiquinone biosynthesis. Catalyzes the prenylation of para-hydroxybenzoate (PHB) with an all-trans polyprenyl group. Mediates the second step in the final reaction sequence of ubiquinone-8 (UQ-8) biosynthesis, which is the condensation of the polyisoprenoid side chain with PHB, generating the first membrane-bound Q intermediate 3-octaprenyl-4-hydroxybenzoate. The protein is 4-hydroxybenzoate octaprenyltransferase of Neisseria gonorrhoeae (strain NCCP11945).